The following is a 570-amino-acid chain: Sulfite reductase [NADPH] hemoprotein beta-component (570 aa).

[4Fe-4S] cluster is bound by residues Cys434, Cys440, Cys479, and Cys483. Cys483 lines the siroheme pocket.

This sequence belongs to the nitrite and sulfite reductase 4Fe-4S domain family. Alpha(8)-beta(8). The alpha component is a flavoprotein, the beta component is a hemoprotein. Requires siroheme as cofactor. The cofactor is [4Fe-4S] cluster.

The enzyme catalyses hydrogen sulfide + 3 NADP(+) + 3 H2O = sulfite + 3 NADPH + 4 H(+). The protein operates within sulfur metabolism; hydrogen sulfide biosynthesis; hydrogen sulfide from sulfite (NADPH route): step 1/1. Component of the sulfite reductase complex that catalyzes the 6-electron reduction of sulfite to sulfide. This is one of several activities required for the biosynthesis of L-cysteine from sulfate. The polypeptide is Sulfite reductase [NADPH] hemoprotein beta-component (Enterobacter sp. (strain 638)).